Here is a 227-residue protein sequence, read N- to C-terminus: Cytochrome c oxidase subunit 2 (227 aa).

Residues 1-14 (MAYPFQLGFQDATS) are Mitochondrial intermembrane-facing. The chain crosses the membrane as a helical span at residues 15–45 (PIMEELLHFHDHALMIVFLISSLVLYLISVM). Over 46–59 (LTTSLTHTSTMDAQ) the chain is Mitochondrial matrix. A helical transmembrane segment spans residues 60–87 (EVETIWTILPAMILIMIALPSLRILYMM). Residues 88–227 (DEINNPYLTV…YFEKWSSSML (140 aa)) are Mitochondrial intermembrane-facing. Residues His-161, Cys-196, Glu-198, Cys-200, His-204, and Met-207 each contribute to the Cu cation site. Mg(2+) is bound at residue Glu-198. Phosphotyrosine is present on Tyr-218.

This sequence belongs to the cytochrome c oxidase subunit 2 family. Component of the cytochrome c oxidase (complex IV, CIV), a multisubunit enzyme composed of 14 subunits. The complex is composed of a catalytic core of 3 subunits MT-CO1, MT-CO2 and MT-CO3, encoded in the mitochondrial DNA, and 11 supernumerary subunits COX4I, COX5A, COX5B, COX6A, COX6B, COX6C, COX7A, COX7B, COX7C, COX8 and NDUFA4, which are encoded in the nuclear genome. The complex exists as a monomer or a dimer and forms supercomplexes (SCs) in the inner mitochondrial membrane with NADH-ubiquinone oxidoreductase (complex I, CI) and ubiquinol-cytochrome c oxidoreductase (cytochrome b-c1 complex, complex III, CIII), resulting in different assemblies (supercomplex SCI(1)III(2)IV(1) and megacomplex MCI(2)III(2)IV(2)). Found in a complex with TMEM177, COA6, COX18, COX20, SCO1 and SCO2. Interacts with TMEM177 in a COX20-dependent manner. Interacts with COX20. Interacts with COX16. It depends on Cu cation as a cofactor.

Its subcellular location is the mitochondrion inner membrane. It catalyses the reaction 4 Fe(II)-[cytochrome c] + O2 + 8 H(+)(in) = 4 Fe(III)-[cytochrome c] + 2 H2O + 4 H(+)(out). Its function is as follows. Component of the cytochrome c oxidase, the last enzyme in the mitochondrial electron transport chain which drives oxidative phosphorylation. The respiratory chain contains 3 multisubunit complexes succinate dehydrogenase (complex II, CII), ubiquinol-cytochrome c oxidoreductase (cytochrome b-c1 complex, complex III, CIII) and cytochrome c oxidase (complex IV, CIV), that cooperate to transfer electrons derived from NADH and succinate to molecular oxygen, creating an electrochemical gradient over the inner membrane that drives transmembrane transport and the ATP synthase. Cytochrome c oxidase is the component of the respiratory chain that catalyzes the reduction of oxygen to water. Electrons originating from reduced cytochrome c in the intermembrane space (IMS) are transferred via the dinuclear copper A center (CU(A)) of subunit 2 and heme A of subunit 1 to the active site in subunit 1, a binuclear center (BNC) formed by heme A3 and copper B (CU(B)). The BNC reduces molecular oxygen to 2 water molecules using 4 electrons from cytochrome c in the IMS and 4 protons from the mitochondrial matrix. The sequence is that of Cytochrome c oxidase subunit 2 (MT-CO2) from Rousettus leschenaultii (Leschenault's rousette).